We begin with the raw amino-acid sequence, 497 residues long: 4,4'-diaponeurosporene oxygenase (497 aa).

7–19 (VIGGGLGGISAAI) lines the FAD pocket.

It belongs to the carotenoid/retinoid oxidoreductase family. CrtP subfamily. FAD serves as cofactor.

The catalysed reaction is all-trans-4,4'-diaponeurosporene + 2 AH2 + 2 O2 = 4,4'-diaponeurosporenal + 2 A + 3 H2O. It participates in carotenoid biosynthesis; staphyloxanthin biosynthesis; staphyloxanthin from farnesyl diphosphate: step 3/5. Involved in the biosynthesis of the yellow-orange carotenoid staphyloxanthin, which plays a role in the virulence via its protective function against oxidative stress. Catalyzes the oxidation of the terminal methyl side group of 4,4'-diaponeurosporene to form 4,4'-diaponeurosporen-4-al. The chain is 4,4'-diaponeurosporene oxygenase from Staphylococcus aureus (strain bovine RF122 / ET3-1).